The chain runs to 485 residues: NADH-quinone oxidoreductase subunit N (485 aa).

The next 14 helical transmembrane spans lie at 8-28, 35-55, 71-91, 105-125, 127-147, 159-179, 203-223, 235-255, 271-291, 297-317, 326-346, 373-393, 408-430, and 455-475; these read LIAL…MLSI, FLNA…LWFV, GFAM…CTFA, FYLL…ANHL, ALFL…GYAF, YTIL…LVYA, LLAG…LAPF, PAPV…GVVM, VVLG…ALSQ, LLGY…IALQ, VGVY…VVSL, AAVM…LGFI, WWLV…RVAV, and IVVL…QPLI.

The protein belongs to the complex I subunit 2 family. In terms of assembly, NDH-1 is composed of 13 different subunits. Subunits NuoA, H, J, K, L, M, N constitute the membrane sector of the complex.

It is found in the cell inner membrane. The enzyme catalyses a quinone + NADH + 5 H(+)(in) = a quinol + NAD(+) + 4 H(+)(out). In terms of biological role, NDH-1 shuttles electrons from NADH, via FMN and iron-sulfur (Fe-S) centers, to quinones in the respiratory chain. The immediate electron acceptor for the enzyme in this species is believed to be ubiquinone. Couples the redox reaction to proton translocation (for every two electrons transferred, four hydrogen ions are translocated across the cytoplasmic membrane), and thus conserves the redox energy in a proton gradient. This chain is NADH-quinone oxidoreductase subunit N, found in Salmonella paratyphi C (strain RKS4594).